A 170-amino-acid polypeptide reads, in one-letter code: Large ribosomal subunit protein uL11 (170 aa).

Belongs to the universal ribosomal protein uL11 family. As to quaternary structure, part of the ribosomal stalk of the 50S ribosomal subunit. Interacts with L10 and the large rRNA to form the base of the stalk. L10 forms an elongated spine to which L12 dimers bind in a sequential fashion forming a multimeric L10(L12)X complex.

Forms part of the ribosomal stalk which helps the ribosome interact with GTP-bound translation factors. This chain is Large ribosomal subunit protein uL11, found in Saccharolobus solfataricus (strain ATCC 35092 / DSM 1617 / JCM 11322 / P2) (Sulfolobus solfataricus).